The sequence spans 417 residues: Brevican core protein (417 aa).

The signal sequence occupies residues methionine 1–alanine 22. Residues aspartate 23 to lysine 155 enclose the Ig-like V-type domain. Cystine bridges form between cysteine 57–cysteine 137, cysteine 179–cysteine 250, and cysteine 203–cysteine 224. Asparagine 130 is a glycosylation site (N-linked (GlcNAc...) asparagine). Link domains are found at residues valine 157–alanine 252 and glycine 257–arginine 354. Asparagine 267 carries an N-linked (GlcNAc...) asparagine glycan. Disulfide bonds link cysteine 277/cysteine 352 and cysteine 301/cysteine 322. Residue asparagine 337 is glycosylated (N-linked (GlcNAc...) asparagine).

It belongs to the aggrecan/versican proteoglycan family. As to expression, central nervous system.

It is found in the secreted. It localises to the extracellular space. The protein resides in the extracellular matrix. Its function is as follows. May play a role in the terminally differentiating and the adult nervous system during postnatal development. Could stabilize interactions between hyaluronan (HA) and brain proteoglycans. This chain is Brevican core protein (BCAN), found in Felis catus (Cat).